Consider the following 126-residue polypeptide: uncharacterized protein (126 aa).

The 99-residue stretch at 8-106 (ISVEATLEVI…WGANHINRVY (99 aa)) folds into the HTH hxlR-type domain.

This is an uncharacterized protein from Bacillus subtilis (strain 168).